Reading from the N-terminus, the 173-residue chain is MNATHCILALQLCLLAISGCSSQVPIIEEIENLKRYFNSSNSAVGDSKDVVLHVLRNWQEDGDTKVIDVQIVSFYFKLFEALKGNQAIEKSINAIRADLIANFFNNSEAKYDGFMSIMKIEVNDPQIQSKAINELVKVMGHLSPRVTLRKRKRSRCCFGGGNRLNKNNPASTI.

The first 22 residues, 1–22 (MNATHCILALQLCLLAISGCSS), serve as a signal peptide directing secretion. At glutamine 23 the chain carries Pyrrolidone carboxylic acid. 2 N-linked (GlcNAc...) asparagine glycosylation sites follow: asparagine 38 and asparagine 105.

Belongs to the type II (or gamma) interferon family. As to quaternary structure, homodimer. Interacts with IFNGR1 (via extracellular domain); this interaction promotes IFNGR1 dimerization. Released primarily from activated T lymphocytes.

The protein localises to the secreted. Functionally, type II interferon produced by immune cells such as T-cells and NK cells that plays crucial roles in antimicrobial, antiviral, and antitumor responses by activating effector immune cells and enhancing antigen presentation. Primarily signals through the JAK-STAT pathway after interaction with its receptor IFNGR1 to affect gene regulation. Upon IFNG binding, IFNGR1 intracellular domain opens out to allow association of downstream signaling components JAK2, JAK1 and STAT1, leading to STAT1 activation, nuclear translocation and transcription of IFNG-regulated genes. Many of the induced genes are transcription factors such as IRF1 that are able to further drive regulation of a next wave of transcription. Plays a role in class I antigen presentation pathway by inducing a replacement of catalytic proteasome subunits with immunoproteasome subunits. In turn, increases the quantity, quality, and repertoire of peptides for class I MHC loading. Increases the efficiency of peptide generation also by inducing the expression of activator PA28 that associates with the proteasome and alters its proteolytic cleavage preference. Up-regulates as well MHC II complexes on the cell surface by promoting expression of several key molecules such as cathepsins B/CTSB, H/CTSH, and L/CTSL. Participates in the regulation of hematopoietic stem cells during development and under homeostatic conditions by affecting their development, quiescence, and differentiation. The polypeptide is Interferon gamma (IFNG) (Meriones unguiculatus (Mongolian jird)).